A 382-amino-acid chain; its full sequence is uncharacterized protein (382 aa).

12 consecutive transmembrane segments (helical) span residues 14–34, 45–65, 79–99, 102–122, 131–151, 157–177, 204–224, 235–255, 270–290, 291–311, 325–345, and 348–368; these read GLLL…LWLA, VVSS…GYVI, FIFA…SWLA, FVAG…LMCS, LLAA…LLVS, LMSV…PLLF, LGVN…GLMP, ASIG…QWPI, VQVF…AMAP, ALFI…AWAC, ALLL…AMLM, and FSDN…LLML.

The protein belongs to the major facilitator superfamily. YcaD (TC 2.A.1.26) family.

It localises to the cell inner membrane. This is an uncharacterized protein from Escherichia coli O45:K1 (strain S88 / ExPEC).